The primary structure comprises 4882 residues: Dual E2 ubiquitin-conjugating enzyme/E3 ubiquitin-protein ligase BIRC6 (4882 aa).

WD repeat units lie at residues 71 to 109 (DGLH…QASA) and 110 to 139 (LSAK…AVGC). The BIR repeat unit spans residues 292–362 (RRETFTSWPH…RHSPNCPFVK (71 aa)). Zn(2+) is bound by residues C331, C334, H351, and C358. A WD 3 repeat occupies 382–429 (LPSADGADRIACFGSGSCPQFLAAATKRGKICIWDVSKLMKVHLKFEI). Disordered regions lie at residues 468–502 (DIPK…SQKE), 542–561 (GANP…KHQE), and 582–622 (ATSP…SELN). Residues 475–485 (DSDDLLEDSDS) are compositionally biased toward acidic residues. S476, S483, and S485 each carry phosphoserine. WD repeat units lie at residues 504–723 (MEVS…VQCL), 733–854 (TLCI…QHIK), 855–931 (DPQD…AKVE), and 932–970 (PPKK…FLQI). Residues 551–561 (KSEKTKEKHQE) show a composition bias toward basic and acidic residues. The span at 582-591 (ATSPISSNSH) shows a compositional bias: polar residues. Residues S584 and S593 each carry the phosphoserine modification. A compositionally biased stretch (polar residues) spans 598-622 (SRTQGESISEQGSTDNESCTNSELN). The interval 1057-1077 (QQQRRHPQHLHQQHHGDAAQH) is disordered. Over residues 1060-1069 (RRHPQHLHQQ) the composition is skewed to basic residues. A Phosphothreonine modification is found at T1724. Phosphoserine occurs at positions 2245 and 2978. The segment at 2969–2998 (VTTNTTDSVSDEEKVSGGKDVNGSSASTPG) is disordered. Residues 3212–3216 (HRRAR) are HRRAR loop; important for DIABLO/SMAC and HTRA2 binding. The 251-residue stretch at 3842–4092 (DEKVTMFLQS…ESLLETCPIQ (251 aa)) folds into the Ubiquitin-like domain. 2 disordered regions span residues 3908–3927 (SEQK…KVKA) and 3943–3973 (LKSQ…IGSA). The residue at position 3954 (T3954) is a Phosphothreonine. S4047 carries the post-translational modification Phosphoserine. The segment at 4285-4304 (VPNSSLSQTEPQVSNSHNPT) is disordered. Over residues 4286-4304 (PNSSLSQTEPQVSNSHNPT) the composition is skewed to polar residues. Positions 4598 to 4765 (ARARRLAQEA…IRQATVKWAM (168 aa)) constitute a UBC core domain. C4691 serves as the catalytic Glycyl thioester intermediate. The interval 4857 to 4882 (AGAEDTLTHDHVNPSSSKDLPSDFQL) is disordered. Residues 4869 to 4882 (NPSSSKDLPSDFQL) are compositionally biased toward polar residues.

It belongs to the BIRC6 family. As to quaternary structure, homodimer; antiparallel. Interacts with DIABLO/SMAC, likely with higher affinity to SMAC dimer than SMAC monomer; this interaction blocks the substrate-binding site and inhibits the caspase inhibition activity of BIRC6. Interacts with RNF41, KIF23/MKLP1, USP8/UBPY, BIRC5/survivin, MAP2K1/MEK1, RAB8A/RAB8, RAB11A/RAB11, PLK1, EXOC3/SEC6 and EXOC4/SEC8. In terms of processing, ubiquitinated. Ubiquitination is mediated by RNF41 E3 ligase and leads to proteasomal degradation, impairing inhibition of apoptosis. Deubiquitinated by USP8/UBPY. Autoubiquitinated; mediated by E1 ubiquitin activating enzyme UBA6. Post-translationally, proteolytically cleaved. Acts as substrate for CASP3, CASP6, CASP7, CASP9 and HTRA2. As to expression, widely expressed. Highly expressed in the brain and kidney.

It localises to the golgi apparatus. The protein localises to the trans-Golgi network membrane. The protein resides in the endosome. It is found in the cytoplasm. Its subcellular location is the cytoskeleton. It localises to the spindle pole. The protein localises to the microtubule organizing center. The protein resides in the centrosome. It is found in the midbody. Its subcellular location is the midbody ring. It catalyses the reaction S-ubiquitinyl-[E1 ubiquitin-activating enzyme]-L-cysteine + [acceptor protein]-L-lysine = [E1 ubiquitin-activating enzyme]-L-cysteine + N(6)-monoubiquitinyl-[acceptor protein]-L-lysine.. With respect to regulation, inhibited by DIABLO/SMAC, which competes for the substrate-binding sites on BIRC6. BIRC6 inhibits caspases and protease by ubiquitination but BIRC6 itself is subjected to protease cleavage by CASP3, CASP6, CASP7, CASP9 and HTRA2 by protease cleavage. In terms of biological role, anti-apoptotic protein known as inhibitor of apoptosis (IAP) which can regulate cell death by controlling caspases and by acting as an E3 ubiquitin-protein ligase. Unlike most IAPs, does not contain a RING domain and it is not a RING-type E3 ligase. Instead acts as a dual E2/E3 enzyme that combines ubiquitin conjugating (E2) and ubiquitin ligase (E3) activities in a single polypeptide. Ubiquitination is mediated by a non-canonical E1 ubiquitin activating enzyme UBA6. Ubiquitinates CASP3, CASP7 and CASP9 and inhibits their caspase activity; also ubiquitinates their procaspases but to a weaker extent. Ubiquitinates pro-apoptotic factors DIABLO/SMAC and HTRA2. DIABLO/SMAC antagonizes the caspase inhibition activity of BIRC6 by competing for the same binding sites as the caspases. Ubiquitinates the autophagy protein MAP1LC3B; this activity is also inhibited by DIABLO/SMAC. Important regulator for the final stages of cytokinesis. Crucial for normal vesicle targeting to the site of abscission, but also for the integrity of the midbody and the midbody ring, and its striking ubiquitin modification. Required for normal placenta development. The chain is Dual E2 ubiquitin-conjugating enzyme/E3 ubiquitin-protein ligase BIRC6 (Birc6) from Mus musculus (Mouse).